Consider the following 446-residue polypeptide: Glutamine synthetase (446 aa).

Residues 18–103 (ENVRYLRLQF…LICDVFKTDG (86 aa)) form the GS beta-grasp domain. The GS catalytic domain occupies 110-446 (PRANLKRVLR…WEREQYIKQY (337 aa)). Mg(2+) is bound by residues Glu-134 and Glu-136. Residue Glu-186 participates in ATP binding. Mg(2+) is bound by residues Glu-191 and Glu-198. Residues 242–243 (NG) and Gly-243 contribute to the L-glutamate site. His-247 serves as a coordination point for Mg(2+). Ser-251 contacts ATP. Residues Arg-300, Glu-306, and Arg-318 each contribute to the L-glutamate site. Residues Arg-318 and Arg-323 each coordinate ATP. Mg(2+) is bound at residue Glu-335. Arg-337 serves as a coordination point for L-glutamate.

Belongs to the glutamine synthetase family. As to quaternary structure, oligomer of 12 subunits arranged in the form of two hexagons. In its feedback-inhibited form, interacts with TnrA in order to block its DNA-binding activity. It depends on Mg(2+) as a cofactor.

The protein localises to the cytoplasm. It catalyses the reaction L-glutamate + NH4(+) + ATP = L-glutamine + ADP + phosphate + H(+). Its activity is regulated as follows. Inhibited by glutamine. Its function is as follows. Glutamine synthetase (GS) is an unusual multitasking protein that functions as an enzyme, a transcription coregulator, and a chaperone in ammonium assimilation and in the regulation of genes involved in nitrogen metabolism. It catalyzes the ATP-dependent biosynthesis of glutamine from glutamate and ammonia. Feedback-inhibited GlnA also interacts with and regulates the activity of the transcriptional regulator TnrA. During nitrogen limitation, TnrA is in its DNA-binding active state and turns on the transcription of genes required for nitrogen assimilation. Under conditions of nitrogen excess, feedback-inhibited GlnA forms a stable complex with TnrA, which inhibits its DNA-binding activity. In contrast, feedback-inhibited GlnA acts as a chaperone to stabilize the DNA-binding activity of GlnR, which represses the transcription of nitrogen assimilation genes. This chain is Glutamine synthetase, found in Staphylococcus epidermidis (strain ATCC 35984 / DSM 28319 / BCRC 17069 / CCUG 31568 / BM 3577 / RP62A).